We begin with the raw amino-acid sequence, 486 residues long: Glycogen synthase (486 aa).

K15 lines the ADP-alpha-D-glucose pocket.

It belongs to the glycosyltransferase 1 family. Bacterial/plant glycogen synthase subfamily.

The enzyme catalyses [(1-&gt;4)-alpha-D-glucosyl](n) + ADP-alpha-D-glucose = [(1-&gt;4)-alpha-D-glucosyl](n+1) + ADP + H(+). Its pathway is glycan biosynthesis; glycogen biosynthesis. Its function is as follows. Synthesizes alpha-1,4-glucan chains using ADP-glucose. This Thermotoga maritima (strain ATCC 43589 / DSM 3109 / JCM 10099 / NBRC 100826 / MSB8) protein is Glycogen synthase.